The following is a 437-amino-acid chain: Protein RecA (437 aa).

69–76 lines the ATP pocket; the sequence is GPESSGKT. The disordered stretch occupies residues 343 to 437; it reads HDAAVRTSPD…GNGKSVKRKG (95 aa). Polar residues-rich tracts occupy residues 350 to 371, 380 to 391, and 400 to 426; these read SPDT…SGSP, GAVNNSRDSTGG, and LNLS…NQKP.

This sequence belongs to the RecA family.

Its subcellular location is the cytoplasm. Functionally, can catalyze the hydrolysis of ATP in the presence of single-stranded DNA, the ATP-dependent uptake of single-stranded DNA by duplex DNA, and the ATP-dependent hybridization of homologous single-stranded DNAs. It interacts with LexA causing its activation and leading to its autocatalytic cleavage. The polypeptide is Protein RecA (Tropheryma whipplei (strain Twist) (Whipple's bacillus)).